The sequence spans 190 residues: Lipid A acyltransferase PagP (190 aa).

Positions 1–18 are cleaved as a signal peptide; sequence MKRLISCLTIICALNASA. Residues histidine 60, aspartate 103, and serine 104 contribute to the active site.

The protein belongs to the lipid A palmitoyltransferase family. As to quaternary structure, homodimer.

The protein localises to the cell outer membrane. It catalyses the reaction a lipid A + a 1,2-diacyl-sn-glycero-3-phosphocholine = a hepta-acyl lipid A + a 2-acyl-sn-glycero-3-phosphocholine. The catalysed reaction is a lipid IVA + a 1,2-diacyl-sn-glycero-3-phosphocholine = a lipid IVB + a 2-acyl-sn-glycero-3-phosphocholine. It carries out the reaction a lipid IIA + a 1,2-diacyl-sn-glycero-3-phosphocholine = a lipid IIB + a 2-acyl-sn-glycero-3-phosphocholine. Transfers a fatty acid residue from the sn-1 position of a phospholipid to the N-linked hydroxyfatty acid chain on the proximal unit of lipid A or its precursors. This Legionella pneumophila (strain Corby) protein is Lipid A acyltransferase PagP.